A 346-amino-acid chain; its full sequence is tRNA pseudouridine synthase D (346 aa).

D81 (nucleophile) is an active-site residue. A TRUD domain is found at G157 to L303.

The protein belongs to the pseudouridine synthase TruD family.

The catalysed reaction is uridine(13) in tRNA = pseudouridine(13) in tRNA. Its function is as follows. Responsible for synthesis of pseudouridine from uracil-13 in transfer RNAs. This is tRNA pseudouridine synthase D from Stutzerimonas stutzeri (strain A1501) (Pseudomonas stutzeri).